A 232-amino-acid polypeptide reads, in one-letter code: MKIGIIGAMEEEVTLLRDKIENRQTITIGGSEIYTGQLHGVDVALLKSGIGKVAAAMGATLLLERCQPDVIINTGSAGGLASTLKVGDIVVSDEARYHDADVTAFGYEYGQLPGCPAGFKADEKLVAAAESCIKALDLNAVRGLIVSGDAFINGSVGLAKIRHNFPQAIAVEMEATAIAHVCHNFKVPFVVVRAISDVADQQSHLSFEEFLAVAARQSTLMVENLVQNLARG.

E12 acts as the Proton acceptor in catalysis. Residues G78, I152, and 173-174 contribute to the substrate site; that span reads ME. Catalysis depends on D197, which acts as the Proton donor.

This sequence belongs to the PNP/UDP phosphorylase family. MtnN subfamily. As to quaternary structure, homodimer.

The catalysed reaction is S-adenosyl-L-homocysteine + H2O = S-(5-deoxy-D-ribos-5-yl)-L-homocysteine + adenine. It carries out the reaction S-methyl-5'-thioadenosine + H2O = 5-(methylsulfanyl)-D-ribose + adenine. It catalyses the reaction 5'-deoxyadenosine + H2O = 5-deoxy-D-ribose + adenine. Its pathway is amino-acid biosynthesis; L-methionine biosynthesis via salvage pathway; S-methyl-5-thio-alpha-D-ribose 1-phosphate from S-methyl-5'-thioadenosine (hydrolase route): step 1/2. Its function is as follows. Catalyzes the irreversible cleavage of the glycosidic bond in both 5'-methylthioadenosine (MTA) and S-adenosylhomocysteine (SAH/AdoHcy) to adenine and the corresponding thioribose, 5'-methylthioribose and S-ribosylhomocysteine, respectively. Also cleaves 5'-deoxyadenosine, a toxic by-product of radical S-adenosylmethionine (SAM) enzymes, into 5-deoxyribose and adenine. Thus, is required for in vivo function of the radical SAM enzymes biotin synthase and lipoic acid synthase, that are inhibited by 5'-deoxyadenosine accumulation. This Klebsiella pneumoniae subsp. pneumoniae (strain ATCC 700721 / MGH 78578) protein is 5'-methylthioadenosine/S-adenosylhomocysteine nucleosidase.